Reading from the N-terminus, the 542-residue chain is GMP synthase [glutamine-hydrolyzing] (542 aa).

The Glutamine amidotransferase type-1 domain occupies 28 to 218 (MLVILDFGSQ…VYHICQCEPT (191 aa)). C105 functions as the Nucleophile in the catalytic mechanism. Residues H192 and E194 contribute to the active site. The 199-residue stretch at 219–417 (WTTEAFVEES…IGLPEEIVRR (199 aa)) folds into the GMPS ATP-PPase domain. 246–252 (SGGVDSS) provides a ligand contact to ATP.

As to quaternary structure, homodimer.

The enzyme catalyses XMP + L-glutamine + ATP + H2O = GMP + L-glutamate + AMP + diphosphate + 2 H(+). It functions in the pathway purine metabolism; GMP biosynthesis; GMP from XMP (L-Gln route): step 1/1. In terms of biological role, catalyzes the synthesis of GMP from XMP. This Rippkaea orientalis (strain PCC 8801 / RF-1) (Cyanothece sp. (strain PCC 8801)) protein is GMP synthase [glutamine-hydrolyzing].